A 292-amino-acid chain; its full sequence is Elongation factor Ts (292 aa).

An involved in Mg(2+) ion dislocation from EF-Tu region spans residues 82–85 (TDFV).

The protein belongs to the EF-Ts family.

It localises to the cytoplasm. Associates with the EF-Tu.GDP complex and induces the exchange of GDP to GTP. It remains bound to the aminoacyl-tRNA.EF-Tu.GTP complex up to the GTP hydrolysis stage on the ribosome. The polypeptide is Elongation factor Ts (Bordetella avium (strain 197N)).